Here is a 490-residue protein sequence, read N- to C-terminus: Cobyric acid synthase (490 aa).

The GATase cobBQ-type domain occupies 252–439; sequence RLKVVVPVLP…LHGLFESTAA (188 aa). The active-site Nucleophile is Cys333. Residue His431 is part of the active site.

The protein belongs to the CobB/CobQ family. CobQ subfamily.

Its pathway is cofactor biosynthesis; adenosylcobalamin biosynthesis. Its function is as follows. Catalyzes amidations at positions B, D, E, and G on adenosylcobyrinic A,C-diamide. NH(2) groups are provided by glutamine, and one molecule of ATP is hydrogenolyzed for each amidation. The chain is Cobyric acid synthase from Pseudomonas paraeruginosa (strain DSM 24068 / PA7) (Pseudomonas aeruginosa (strain PA7)).